The following is a 351-amino-acid chain: Prostaglandin reductase 2 (351 aa).

Residue 99 to 100 (FY) participates in substrate binding. NADP(+) contacts are provided by residues 165 to 168 (GACG), lysine 192, tyrosine 208, asparagine 231, 253 to 259 (CGQISQY), 287 to 289 (FLV), and asparagine 337. 288 to 290 (LVL) is a binding site for substrate.

It belongs to the NADP-dependent oxidoreductase L4BD family. Monomer.

It is found in the cytoplasm. The enzyme catalyses 13,14-dihydro-15-oxo-prostaglandin E2 + NAD(+) = 15-oxoprostaglandin E2 + NADH + H(+). The catalysed reaction is 13,14-dihydro-15-oxo-prostaglandin E2 + NADP(+) = 15-oxoprostaglandin E2 + NADPH + H(+). It carries out the reaction 13,14-dihydro-15-oxo-PGF2alpha + NADP(+) = 15-oxoprostaglandin F2alpha + NADPH + H(+). It catalyses the reaction 13,14-dihydro-15-oxo-prostaglandin E1 + NADP(+) = 15-oxoprostaglandin E1 + NADPH + H(+). The enzyme catalyses 13,14-dihydro-15-oxo-prostaglandin F1alpha + NADP(+) = 15-oxoprostaglandin F1alpha + NADPH + H(+). Functionally, functions as 15-oxo-prostaglandin 13-reductase and acts on 15-keto-PGE1, 15-keto-PGE2, 15-keto-PGE1-alpha and 15-keto-PGE2-alpha with highest activity towards 15-keto-PGE2. Overexpression represses transcriptional activity of PPARG and inhibits adipocyte differentiation. The protein is Prostaglandin reductase 2 (PTGR2) of Pongo abelii (Sumatran orangutan).